The sequence spans 217 residues: ATP-dependent Clp protease proteolytic subunit 2 (217 aa).

The active-site Nucleophile is the S121. Residue H146 is part of the active site.

The protein belongs to the peptidase S14 family. In terms of assembly, fourteen ClpP subunits assemble into 2 heptameric rings which stack back to back to give a disk-like structure with a central cavity, resembling the structure of eukaryotic proteasomes.

The protein localises to the cytoplasm. It catalyses the reaction Hydrolysis of proteins to small peptides in the presence of ATP and magnesium. alpha-casein is the usual test substrate. In the absence of ATP, only oligopeptides shorter than five residues are hydrolyzed (such as succinyl-Leu-Tyr-|-NHMec, and Leu-Tyr-Leu-|-Tyr-Trp, in which cleavage of the -Tyr-|-Leu- and -Tyr-|-Trp bonds also occurs).. In terms of biological role, cleaves peptides in various proteins in a process that requires ATP hydrolysis. Has a chymotrypsin-like activity. Plays a major role in the degradation of misfolded proteins. In Paraburkholderia xenovorans (strain LB400), this protein is ATP-dependent Clp protease proteolytic subunit 2.